A 339-amino-acid polypeptide reads, in one-letter code: Phosphate acyltransferase (339 aa).

Belongs to the PlsX family. Homodimer. Probably interacts with PlsY.

Its subcellular location is the cytoplasm. The catalysed reaction is a fatty acyl-[ACP] + phosphate = an acyl phosphate + holo-[ACP]. It participates in lipid metabolism; phospholipid metabolism. Its function is as follows. Catalyzes the reversible formation of acyl-phosphate (acyl-PO(4)) from acyl-[acyl-carrier-protein] (acyl-ACP). This enzyme utilizes acyl-ACP as fatty acyl donor, but not acyl-CoA. The chain is Phosphate acyltransferase from Acetivibrio thermocellus (strain ATCC 27405 / DSM 1237 / JCM 9322 / NBRC 103400 / NCIMB 10682 / NRRL B-4536 / VPI 7372) (Clostridium thermocellum).